Here is a 259-residue protein sequence, read N- to C-terminus: DNA repair protein RecO (259 aa).

It belongs to the RecO family.

Its function is as follows. Involved in DNA repair and RecF pathway recombination. This Leuconostoc mesenteroides subsp. mesenteroides (strain ATCC 8293 / DSM 20343 / BCRC 11652 / CCM 1803 / JCM 6124 / NCDO 523 / NBRC 100496 / NCIMB 8023 / NCTC 12954 / NRRL B-1118 / 37Y) protein is DNA repair protein RecO.